A 658-amino-acid polypeptide reads, in one-letter code: Serine/threonine-protein kinase shk1/pak1 (658 aa).

4 disordered regions span residues methionine 1–isoleucine 21, arginine 39–glutamate 104, glycine 126–isoleucine 147, and glycine 213–asparagine 365. The span at proline 66–aspartate 98 shows a compositional bias: polar residues. The span at serine 129–serine 140 shows a compositional bias: low complexity. The CRIB domain occupies isoleucine 147–glycine 160. 2 stretches are compositionally biased toward low complexity: residues proline 226–serine 254 and alanine 262–serine 272. Polar residues predominate over residues glutamine 273 to arginine 300. A phosphoserine mark is found at serine 301 and serine 303. A Protein kinase domain is found at tyrosine 386–leucine 637. Residues isoleucine 392–valine 400 and lysine 415 each bind ATP. Aspartate 505 acts as the Proton acceptor in catalysis.

It belongs to the protein kinase superfamily. STE Ser/Thr protein kinase family. STE20 subfamily. Forms an activated complex with GTP-bound ras-like cdc42. Interacts with skb1 and the SH3 domain of skb5 via its amino-terminal regulatory domain. Skb1, cdc42 and shk1 are able to form a ternary complex in vivo. Interacts with rga8 and may interact with byr2. Autophosphorylated on serine residues.

The protein localises to the cytoplasm. Its subcellular location is the cytoskeleton. The protein resides in the spindle. The catalysed reaction is L-seryl-[protein] + ATP = O-phospho-L-seryl-[protein] + ADP + H(+). It carries out the reaction L-threonyl-[protein] + ATP = O-phospho-L-threonyl-[protein] + ADP + H(+). Functionally, MAP4K component of the MAPK pathway required for the mating pheromone response. Phosphorylates histone H2B to form H2BS10ph. Phosphorylates tea1. Required for skb1-dependent mitotic inhibitory function. Regulates microtubule dynamics and cell polarity. This chain is Serine/threonine-protein kinase shk1/pak1 (shk1), found in Schizosaccharomyces pombe (strain 972 / ATCC 24843) (Fission yeast).